We begin with the raw amino-acid sequence, 392 residues long: Arogenate dehydratase/prephenate dehydratase 1, chloroplastic (392 aa).

The transit peptide at 1-48 (MALRCFPIWVCPQTTHHRSPLMGLAEFDADKRRRFCLWECSSSASQRA) directs the protein to the chloroplast. The Prephenate dehydratase domain occupies 107–282 (RISFQGIPGA…NVTRFLILAR (176 aa)). In terms of domain architecture, ACT spans 296 to 387 (SIVFSLEEGP…SFIRILGCYP (92 aa)).

In terms of tissue distribution, expressed in roots, leaves, stems, flowers and siliques.

The protein resides in the plastid. It is found in the chloroplast stroma. It catalyses the reaction L-arogenate + H(+) = L-phenylalanine + CO2 + H2O. It carries out the reaction prephenate + H(+) = 3-phenylpyruvate + CO2 + H2O. Its pathway is amino-acid biosynthesis; L-phenylalanine biosynthesis; L-phenylalanine from L-arogenate: step 1/1. It participates in amino-acid biosynthesis; L-phenylalanine biosynthesis; phenylpyruvate from prephenate: step 1/1. Converts the prephenate produced from the shikimate-chorismate pathway into phenylalanine. Dehydratase that uses arogenate and prephenate as substrates. Utilzes more efficiently arogenate than prephenate. This chain is Arogenate dehydratase/prephenate dehydratase 1, chloroplastic, found in Arabidopsis thaliana (Mouse-ear cress).